A 453-amino-acid chain; its full sequence is UDP-N-acetylmuramoylalanine--D-glutamate ligase (453 aa).

Residue 115 to 121 (GSNGKTT) participates in ATP binding.

The protein belongs to the MurCDEF family.

The protein localises to the cytoplasm. It catalyses the reaction UDP-N-acetyl-alpha-D-muramoyl-L-alanine + D-glutamate + ATP = UDP-N-acetyl-alpha-D-muramoyl-L-alanyl-D-glutamate + ADP + phosphate + H(+). The protein operates within cell wall biogenesis; peptidoglycan biosynthesis. Its function is as follows. Cell wall formation. Catalyzes the addition of glutamate to the nucleotide precursor UDP-N-acetylmuramoyl-L-alanine (UMA). The protein is UDP-N-acetylmuramoylalanine--D-glutamate ligase of Koribacter versatilis (strain Ellin345).